The following is a 528-amino-acid chain: GMP synthase [glutamine-hydrolyzing] (528 aa).

The Glutamine amidotransferase type-1 domain maps to 13–204 (SILILDFGSQ…VYSIAKCKAD (192 aa)). The active-site Nucleophile is Cys-90. Catalysis depends on residues His-178 and Glu-180. The region spanning 205 to 403 (WTTETFLEET…LGLPDEIIKR (199 aa)) is the GMPS ATP-PPase domain. 232 to 238 (SGGVDSS) contacts ATP.

Homodimer.

The enzyme catalyses XMP + L-glutamine + ATP + H2O = GMP + L-glutamate + AMP + diphosphate + 2 H(+). It functions in the pathway purine metabolism; GMP biosynthesis; GMP from XMP (L-Gln route): step 1/1. Catalyzes the synthesis of GMP from XMP. The chain is GMP synthase [glutamine-hydrolyzing] from Prochlorococcus marinus subsp. pastoris (strain CCMP1986 / NIES-2087 / MED4).